Reading from the N-terminus, the 198-residue chain is Dual specificity protein phosphatase 14 (198 aa).

The region spanning 26 to 167 is the Tyrosine-protein phosphatase domain; it reads GIAQITSSLF…LIDYESQLFG (142 aa). C111 acts as the Phosphocysteine intermediate in catalysis.

Belongs to the protein-tyrosine phosphatase family. Non-receptor class dual specificity subfamily.

It catalyses the reaction O-phospho-L-tyrosyl-[protein] + H2O = L-tyrosyl-[protein] + phosphate. The enzyme catalyses O-phospho-L-seryl-[protein] + H2O = L-seryl-[protein] + phosphate. It carries out the reaction O-phospho-L-threonyl-[protein] + H2O = L-threonyl-[protein] + phosphate. Functionally, involved in the inactivation of MAP kinases. Dephosphorylates ERK, JNK and p38 MAP-kinases. Plays a negative role in TCR signaling by dephosphorylating MAP3K7 adapter TAB1 leading to its inactivation. This Mus musculus (Mouse) protein is Dual specificity protein phosphatase 14 (Dusp14).